The following is a 426-amino-acid chain: DNA polymerase processivity factor component OPG148 (426 aa).

This sequence belongs to the orthopoxvirus OPG148 family. In terms of assembly, interacts with the DNA polymerase catalytic subunit OPG071. Interacts with UDG/OPG116. Component of the uracil-DNA glycosylase(UDG)-OPG148-polymerase complex; OPG148 and UDG form a heterodimeric processivity factor that associates with OPG071 to form the processive polymerase holoenzyme. Interacts with OPG117.

Its function is as follows. Plays an essential role in viral DNA replication by acting as the polymerase processivity factor together with protein OPG116. Serves as a bridge which links the DNA polymerase OPG071 and the uracil DNA glycosylase. The sequence is that of DNA polymerase processivity factor component OPG148 (OPG148) from Cynomys gunnisoni (Gunnison's prairie dog).